The primary structure comprises 160 residues: Arsenate reductase 2.1 (160 aa).

One can recognise a Rhodanese domain in the interval 42–143 (SNPRVAIIDV…WELSGQPVCR (102 aa)). Cysteine 94 serves as the catalytic Cysteine persulfide intermediate.

It carries out the reaction [glutaredoxin]-dithiol + arsenate + glutathione + H(+) = glutathionyl-S-S-[glutaredoxin] + arsenite + H2O. In terms of biological role, possesses arsenate reductase activity in vitro. Catalyzes the reduction of arsenate [As(V)] to arsenite [As(III)]. May play a role in arsenic retention in roots. Its function is as follows. Possesses phosphatase activity towards p-nitrophenyl phosphate in vitro. The polypeptide is Arsenate reductase 2.1 (ACR2.1) (Oryza sativa subsp. japonica (Rice)).